We begin with the raw amino-acid sequence, 416 residues long: MIYTAIDNFYLSDEQLKASPSRKDGIDETTEISLRIYGCDLIQEGGILLKLPQAVMATGQVLFQRFYCKKSLAKFDVKIVAASCVWLASKLEENPKKARQVIIVFHRMECRRENLPLEHLDMYAKKFSELKVELSRTERHILKEMGFVCHVEHPHKFISNYLATLETPPELRQEAWNLANDSLRTTLCVRFRSEVVACGVVYAAARRFQVPLPENPPWWKAFDADKSSIDEVCRVLAHLYSLPKAQYISVCKDGKPFTFSSRSGNSQGQSATKDLLPGAGEAVDTKCTAGSANNDLKDGMVTTPHEKATDSKKSGTESNSQPIVGDSSYERSKVGDRERESDREKERGRERDRGRSHRGRDSDRDSDRERDKLKDRSHHRSRDRLKDSGGHSDKSRHHSSRDRDYRDSSKDRRRHH.

The tract at residues 286–416 (KCTAGSANND…DSSKDRRRHH (131 aa)) is disordered. Basic and acidic residues-rich tracts occupy residues 304–315 (PHEKATDSKKSG), 328–374 (SYER…DKLK), 384–393 (RLKDSGGHSD), and 401–410 (RDRDYRDSSK).

Belongs to the cyclin family. Cyclin L subfamily. As to quaternary structure, forms a complex with CDKG1. Interacts with MOS4 and associates with the spliceosome.

It localises to the nucleus. Its function is as follows. Cognate cyclin for CDKG1. Required for synapsis and male meiosis, and for the proper splicing of specific resistance (R) genes. Involved in regulation of DNA methylation and transcriptional silencing. The sequence is that of Cyclin-L1-1 (CYCL1-1) from Arabidopsis thaliana (Mouse-ear cress).